A 132-amino-acid polypeptide reads, in one-letter code: UPF0299 membrane protein CKO_00648 (132 aa).

Helical transmembrane passes span 7-27 (IIWQ…AGIF), 31-51 (LLPI…VLLA), 63-83 (GCYV…VGVM), and 93-113 (FGPV…VVSW).

This sequence belongs to the UPF0299 family.

The protein resides in the cell inner membrane. The polypeptide is UPF0299 membrane protein CKO_00648 (Citrobacter koseri (strain ATCC BAA-895 / CDC 4225-83 / SGSC4696)).